A 420-amino-acid chain; its full sequence is LanC-like protein 3 homolog (420 aa).

It belongs to the LanC-like protein family.

This Drosophila pseudoobscura pseudoobscura (Fruit fly) protein is LanC-like protein 3 homolog.